A 405-amino-acid polypeptide reads, in one-letter code: MAINTPLTNSWLDEFPARIAELDRAHLRRRRRVVVPEDGAHLQVDGQRMLAFCSNDYLGLAGHPALVQAACDGARAFGVGAAASPLVSGHSAANEALEAALARFVGQPRALYFYAGYATNIGIVPALVGKGDAIFSDALNHACLIDGARLSSAQIHRYPHADLAALEQELISSPARRKLIISDAVFSMDGDVADVPALLALCERHDALLLLDDAHGFGVLGPQGRGCLAHFGLSGENASPRVLYMATLGKAAGVAGAFVAGSEALVEWLLQKTRSYIFATAAPALLATALQTSLQLIEQDEWRREHLQRLIARLRSGLAQGLQGSSWRLGESPTAIQPVVIGPNDAALAVMEGLRTRGLWVPAIRPPTVAEGTARLRIALSAAHTEADIDRLVQALTELAKPGSL.

Arg29 provides a ligand contact to substrate. 116 to 117 (GY) provides a ligand contact to pyridoxal 5'-phosphate. Residue His141 participates in substrate binding. Pyridoxal 5'-phosphate is bound by residues Ser187, His215, and Thr247. Lys250 bears the N6-(pyridoxal phosphate)lysine mark. Substrate is bound at residue Thr368.

Belongs to the class-II pyridoxal-phosphate-dependent aminotransferase family. BioF subfamily. As to quaternary structure, homodimer. It depends on pyridoxal 5'-phosphate as a cofactor.

The catalysed reaction is 6-carboxyhexanoyl-[ACP] + L-alanine + H(+) = (8S)-8-amino-7-oxononanoate + holo-[ACP] + CO2. The protein operates within cofactor biosynthesis; biotin biosynthesis. Catalyzes the decarboxylative condensation of pimeloyl-[acyl-carrier protein] and L-alanine to produce 8-amino-7-oxononanoate (AON), [acyl-carrier protein], and carbon dioxide. The protein is 8-amino-7-oxononanoate synthase 1 of Polaromonas sp. (strain JS666 / ATCC BAA-500).